The following is an 89-amino-acid chain: Large ribosomal subunit protein bL27 (89 aa).

A disordered region spans residues 1 to 20 (MAHKKAGGSSRNGRDSAGQR).

Belongs to the bacterial ribosomal protein bL27 family.

In Paramagnetospirillum magneticum (strain ATCC 700264 / AMB-1) (Magnetospirillum magneticum), this protein is Large ribosomal subunit protein bL27.